A 337-amino-acid polypeptide reads, in one-letter code: GDP-fucose transporter, Golgi (337 aa).

The next 8 membrane-spanning stretches (helical) occupy residues 13–35 (NKYL…TVFV), 45–67 (VNLG…ICFV), 95–117 (ILPL…SYVT), 121–140 (YYIG…YVIL), 145–163 (SFKC…WLGV), 173–192 (SWRG…MFSI), 205–227 (VWLL…IIIN), and 242–264 (SWFW…VTAL).

Belongs to the TPT transporter family. SLC35C subfamily.

The protein localises to the golgi apparatus membrane. Functionally, involved in GDP-fucose import from the cytoplasm into the Golgi lumen. Plays a major role in the fucosylation of N-glycans. Functions redundantly with Efr in the O-fucosylation of Notch, positively regulating Notch signaling. The polypeptide is GDP-fucose transporter, Golgi (Drosophila melanogaster (Fruit fly)).